A 203-amino-acid polypeptide reads, in one-letter code: Recombination protein RecR (203 aa).

The C4-type zinc-finger motif lies at 56–71; sequence CAVCGNVSDNERCRIC. The Toprim domain occupies 79 to 179; the sequence is SVVCIVEEPK…TVTRIASGLP (101 aa).

It belongs to the RecR family.

Its function is as follows. May play a role in DNA repair. It seems to be involved in an RecBC-independent recombinational process of DNA repair. It may act with RecF and RecO. The chain is Recombination protein RecR from Mycobacterium bovis (strain ATCC BAA-935 / AF2122/97).